An 828-amino-acid polypeptide reads, in one-letter code: Hapless 2 (828 aa).

An N-terminal signal peptide occupies residues 1–32 (MKNKLINLRSKHIYKLIIIIFFCIILKYYKWC). Residues 33 to 680 (DFKNKVFFIQ…INTVKTLIGK (648 aa)) are Extracellular-facing. Cysteines 53 and 62 form a disulfide. A glycan (N-linked (GlcNAc...) asparagine) is linked at N74. Intrachain disulfides connect C142/C209, C170/C381, C172/C191, and C363/C388. A cd loop; involved in gamete fusion region spans residues 174-191 (TYNYFKDDEFIKRAKLKC). N-linked (GlcNAc...) asparagine glycans are attached at residues N233, N250, N264, N293, and N333. Residues N479, N516, N531, and N539 are each glycosylated (N-linked (GlcNAc...) asparagine). The cysteines at positions 546 and 592 are disulfide-linked. Residues 681-701 (FAIIAILIILAPALIPLLPFF) form a helical membrane-spanning segment. The Cytoplasmic segment spans residues 702-828 (LNFFFLFIST…SGKSKIPPLR (127 aa)). The tract at residues 773–828 (RKNKKKFNKNNISSNIKHKKGGKKVKQKEPNRNSNHTSHEYADTSPSGKSKIPPLR) is disordered. The span at 788–798 (IKHKKGGKKVK) shows a compositional bias: basic residues. The segment covering 799–814 (QKEPNRNSNHTSHEYA) has biased composition (basic and acidic residues).

Belongs to the HAP2/GCS1 family.

It is found in the cell membrane. Its function is as follows. During fertilization, required on male gametes for their fusion with female gametes, and for subsequent ookinete formation in the host. Thereby, required for mosquito-mediated transmission to other animals. Probably initiates the fusion of gamete cell membranes by inserting part of its extracellular domain into the cell membrane of a female gamete. This chain is Hapless 2, found in Plasmodium berghei (strain Anka).